We begin with the raw amino-acid sequence, 352 residues long: Gamma-aminobutyric acid-binding protein (352 aa).

The N-terminal stretch at 1–28 is a signal peptide; sequence MFKSLHQYAHVFSRLSLFGLAFAAAAQA.

It belongs to the bacterial solute-binding protein 1 family.

The protein localises to the periplasm. Functionally, binds specifically gamma-aminobutyric acid (GABA) with nanomolar affinity. Does not bind structurally related compounds such as 4-aminovaleric acid, spermidine, histamine and butyric acid. This is Gamma-aminobutyric acid-binding protein from Pseudomonas aeruginosa (strain ATCC 15692 / DSM 22644 / CIP 104116 / JCM 14847 / LMG 12228 / 1C / PRS 101 / PAO1).